The following is a 122-amino-acid chain: Large ribosomal subunit protein uL14 (122 aa).

The protein belongs to the universal ribosomal protein uL14 family. As to quaternary structure, part of the 50S ribosomal subunit. Forms a cluster with proteins L3 and L19. In the 70S ribosome, L14 and L19 interact and together make contacts with the 16S rRNA in bridges B5 and B8.

In terms of biological role, binds to 23S rRNA. Forms part of two intersubunit bridges in the 70S ribosome. The sequence is that of Large ribosomal subunit protein uL14 from Nocardioides sp. (strain ATCC BAA-499 / JS614).